We begin with the raw amino-acid sequence, 378 residues long: Probable endopolygalacturonase AFUB_016610 (378 aa).

The signal sequence occupies residues 1–19 (MLKLMGSLVLLASAAEVIA). A propeptide spanning residues 20–35 (SPAAEPVAPSTTLEKR) is cleaved from the precursor. Cys38 and Cys56 are disulfide-bonded. PbH1 repeat units follow at residues 147-169 (TSSSSITDLHILNTPVQAVSING), 170-200 (CDGLTITDITIDNSAGDTQGGHNTDAFDIGS), and 201-222 (SSNIIISGAKVYNQDDCVAVNS). Asp215 functions as the Proton donor in the catalytic mechanism. Residues Cys217 and Cys233 are joined by a disulfide bond. His237 is a catalytic residue. 2 PbH1 repeats span residues 252-273 (VENVSFTNSQVTNSDNGLRIKA) and 281-303 (IKGVTYSGITLSSIRKYGILIEQ). Residue Asn254 is glycosylated (N-linked (GlcNAc...) asparagine). Asn327 carries an N-linked (GlcNAc...) asparagine glycan. A disulfide bridge connects residues Cys345 and Cys350. N-linked (GlcNAc...) asparagine glycosylation occurs at Asn352. A disulfide bridge connects residues Cys369 and Cys378.

The protein belongs to the glycosyl hydrolase 28 family.

The protein localises to the secreted. The enzyme catalyses (1,4-alpha-D-galacturonosyl)n+m + H2O = (1,4-alpha-D-galacturonosyl)n + (1,4-alpha-D-galacturonosyl)m.. Its function is as follows. Involved in maceration and soft-rotting of plant tissue. Hydrolyzes the 1,4-alpha glycosidic bonds of de-esterified pectate in the smooth region of the plant cell wall. In Aspergillus fumigatus (strain CBS 144.89 / FGSC A1163 / CEA10) (Neosartorya fumigata), this protein is Probable endopolygalacturonase AFUB_016610.